A 445-amino-acid polypeptide reads, in one-letter code: Exodeoxyribonuclease 7 large subunit (445 aa).

This sequence belongs to the XseA family. In terms of assembly, heterooligomer composed of large and small subunits.

Its subcellular location is the cytoplasm. It carries out the reaction Exonucleolytic cleavage in either 5'- to 3'- or 3'- to 5'-direction to yield nucleoside 5'-phosphates.. In terms of biological role, bidirectionally degrades single-stranded DNA into large acid-insoluble oligonucleotides, which are then degraded further into small acid-soluble oligonucleotides. In Staphylococcus epidermidis (strain ATCC 12228 / FDA PCI 1200), this protein is Exodeoxyribonuclease 7 large subunit.